The chain runs to 540 residues: DM7 family protein GM11956 (540 aa).

Residues 416–443 (ATDTRGRDEIRTSCDQPQEKDEGSAEAD) form a disordered region. Over residues 417 to 443 (TDTRGRDEIRTSCDQPQEKDEGSAEAD) the composition is skewed to basic and acidic residues.

Belongs to the DM7 family.

The sequence is that of DM7 family protein GM11956 from Drosophila sechellia (Fruit fly).